The primary structure comprises 207 residues: Phosphatidylinositol phosphate synthase (207 aa).

2 helical membrane passes run 21–44 and 50–67; these read LRAH…MALI and WLWQ…SDSL. A CDP-1,2-diacyl-sn-glycerol is bound at residue 28 to 31; the sequence is DVVT. 2 residues coordinate Mg(2+): Asp-65 and Asp-68. A CDP-1,2-diacyl-sn-glycerol-binding residues include Gly-69, Arg-73, and Ser-79. The Mg(2+) site is built by Asp-86 and Asp-90. 4 helical membrane passes run 88 to 106, 112 to 131, 152 to 170, and 176 to 195; these read TLDR…LYFA, VLWT…TSYV, RLLV…RVGA, and VVAL…ITVV. Asp-90 serves as the catalytic Proton acceptor.

Belongs to the CDP-alcohol phosphatidyltransferase class-I family. Homodimer. Mg(2+) serves as cofactor.

It is found in the cell membrane. It catalyses the reaction a CDP-1,2-diacyl-sn-glycerol + 1D-myo-inositol 3-phosphate = a 1,2-diacyl-sn-glycero-3-phospho-(1D-myo-inositol-3-phosphate) + CMP + H(+). It carries out the reaction 1,2-di-(9Z-octadecenoyl)-sn-glycero-3-cytidine-5'-diphosphate + 1D-myo-inositol 3-phosphate = 1,2-di-(9Z-octadecenoyl)-sn-glycero-3-phospho-(1D-myo-inositol-3-phosphate) + CMP + H(+). The protein operates within phospholipid metabolism; phosphatidylinositol phosphate biosynthesis. In terms of biological role, catalyzes the conjugation of the 1'-hydroxyl group of D-myo-inositol-3-phosphate (also named L-myo-inositol-1-phosphate) with a lipid tail of cytidine diphosphate diacylglycerol (CDP-DAG), forming phosphatidylinositol phosphate (PIP) and CMP. PIP is a precursor of phosphatidylinositol (PI) which is an essential lipid required for cell wall formation. This chain is Phosphatidylinositol phosphate synthase, found in Cutibacterium acnes (strain DSM 16379 / KPA171202) (Propionibacterium acnes).